Reading from the N-terminus, the 150-residue chain is 3-hydroxyacyl-[acyl-carrier-protein] dehydratase FabZ (150 aa).

His51 is a catalytic residue.

It belongs to the thioester dehydratase family. FabZ subfamily.

The protein resides in the cytoplasm. It carries out the reaction a (3R)-hydroxyacyl-[ACP] = a (2E)-enoyl-[ACP] + H2O. Involved in unsaturated fatty acids biosynthesis. Catalyzes the dehydration of short chain beta-hydroxyacyl-ACPs and long chain saturated and unsaturated beta-hydroxyacyl-ACPs. The chain is 3-hydroxyacyl-[acyl-carrier-protein] dehydratase FabZ from Rubrobacter xylanophilus (strain DSM 9941 / JCM 11954 / NBRC 16129 / PRD-1).